Reading from the N-terminus, the 316-residue chain is Ribosomal protein L11 methyltransferase (316 aa).

S-adenosyl-L-methionine contacts are provided by T159, G179, D201, and N243.

The protein belongs to the methyltransferase superfamily. PrmA family.

The protein resides in the cytoplasm. It carries out the reaction L-lysyl-[protein] + 3 S-adenosyl-L-methionine = N(6),N(6),N(6)-trimethyl-L-lysyl-[protein] + 3 S-adenosyl-L-homocysteine + 3 H(+). Functionally, methylates ribosomal protein L11. The chain is Ribosomal protein L11 methyltransferase from Gloeobacter violaceus (strain ATCC 29082 / PCC 7421).